Consider the following 99-residue polypeptide: Nucleoid-associated protein SpyM3_1606 (99 aa).

Belongs to the YbaB/EbfC family. In terms of assembly, homodimer.

It is found in the cytoplasm. It localises to the nucleoid. Binds to DNA and alters its conformation. May be involved in regulation of gene expression, nucleoid organization and DNA protection. The polypeptide is Nucleoid-associated protein SpyM3_1606 (Streptococcus pyogenes serotype M3 (strain ATCC BAA-595 / MGAS315)).